A 192-amino-acid chain; its full sequence is Ribosome maturation factor RimM (192 aa).

Positions 97-172 (EDEYYLADLI…VVLADPPALV (76 aa)) constitute a PRC barrel domain. The disordered stretch occupies residues 168–192 (PPALVGEPEGPESPAEDDDGERHYD).

The protein belongs to the RimM family. In terms of assembly, binds ribosomal protein uS19.

The protein resides in the cytoplasm. Functionally, an accessory protein needed during the final step in the assembly of 30S ribosomal subunit, possibly for assembly of the head region. Essential for efficient processing of 16S rRNA. May be needed both before and after RbfA during the maturation of 16S rRNA. It has affinity for free ribosomal 30S subunits but not for 70S ribosomes. The sequence is that of Ribosome maturation factor RimM from Caulobacter sp. (strain K31).